The primary structure comprises 594 residues: Aspartate--tRNA(Asp/Asn) ligase (594 aa).

Glutamate 173 is a binding site for L-aspartate. An aspartate region spans residues 197 to 200; the sequence is QLFK. Arginine 219 is an L-aspartate binding site. ATP contacts are provided by residues 219–221 and glutamine 228; that span reads RDE. Residue histidine 449 participates in L-aspartate binding. Glutamate 482 lines the ATP pocket. Arginine 489 is an L-aspartate binding site. 534–537 is a binding site for ATP; it reads GLDR.

Belongs to the class-II aminoacyl-tRNA synthetase family. Type 1 subfamily. In terms of assembly, homodimer.

Its subcellular location is the cytoplasm. It catalyses the reaction tRNA(Asx) + L-aspartate + ATP = L-aspartyl-tRNA(Asx) + AMP + diphosphate. In terms of biological role, aspartyl-tRNA synthetase with relaxed tRNA specificity since it is able to aspartylate not only its cognate tRNA(Asp) but also tRNA(Asn). Reaction proceeds in two steps: L-aspartate is first activated by ATP to form Asp-AMP and then transferred to the acceptor end of tRNA(Asp/Asn). This Saccharophagus degradans (strain 2-40 / ATCC 43961 / DSM 17024) protein is Aspartate--tRNA(Asp/Asn) ligase.